Reading from the N-terminus, the 427-residue chain is Glutamate-1-semialdehyde 2,1-aminomutase (427 aa).

N6-(pyridoxal phosphate)lysine is present on K265.

It belongs to the class-III pyridoxal-phosphate-dependent aminotransferase family. HemL subfamily. As to quaternary structure, homodimer. Pyridoxal 5'-phosphate serves as cofactor.

The protein localises to the cytoplasm. The enzyme catalyses (S)-4-amino-5-oxopentanoate = 5-aminolevulinate. It functions in the pathway porphyrin-containing compound metabolism; protoporphyrin-IX biosynthesis; 5-aminolevulinate from L-glutamyl-tRNA(Glu): step 2/2. This chain is Glutamate-1-semialdehyde 2,1-aminomutase, found in Pseudomonas putida (strain ATCC 47054 / DSM 6125 / CFBP 8728 / NCIMB 11950 / KT2440).